An 896-amino-acid polypeptide reads, in one-letter code: Vacuolar zinc transporter TgZnT (896 aa).

At 1–472 (MPFSCFVFSQ…ETGTQRARRK (472 aa)) the chain is on the cytoplasmic side. Residues 82–91 (VLSSRGDESV) are compositionally biased toward basic and acidic residues. Disordered regions lie at residues 82–104 (VLSS…SPGF), 205–227 (MKEI…RPCA), and 255–329 (SSSC…SSAS). Low complexity-rich tracts occupy residues 210–225 (SPRS…SSRP) and 255–266 (SSSCCSRSNSSS). The span at 303 to 322 (VHERRAEATCCAPRDRHGGD) shows a compositional bias: basic and acidic residues. A helical membrane pass occupies residues 473–493 (LVMASMVCCVFMFVEIVAGVL). Topologically, residues 494 to 502 (ANSLALMTD) are vacuolar. A helical transmembrane segment spans residues 503–523 (ASHLLSDLCAFLISLFALWVS). Residues 524–539 (ELKGNPSMSFGYHRAE) lie on the Cytoplasmic side of the membrane. A helical membrane pass occupies residues 540 to 560 (ILGALLSVFLIWVLTAVLIYA). At 561 to 573 (ACFRLVDPPQVDG) the chain is on the vacuolar side. The chain crosses the membrane as a helical span at residues 574 to 594 (ELMFWTALLGTLANLFMTHIL). Over 595–737 (KVHSHGIGQV…YENMNLRAAY (143 aa)) the chain is Cytoplasmic. The tract at residues 621 to 707 (LQASSSSPEK…RPFSASSAGS (87 aa)) is disordered. The span at 656-680 (RDAEAGRDAEAGRDAEAGRDAETGR) shows a compositional bias: basic and acidic residues. The chain crosses the membrane as a helical span at residues 738–758 (IHALGDLLQNIGVMIASALIW). Residues 759–762 (WRPD) are Vacuolar-facing. Residues 763 to 783 (WAIADPICTFIFSIFVLFTTL) traverse the membrane as a helical segment. Residues 784 to 896 (SILKEALNVL…CSDPMKVFRR (113 aa)) are Cytoplasmic-facing.

It belongs to the cation diffusion facilitator (CDF) transporter (TC 2.A.4) family. SLC30A subfamily.

The protein localises to the vacuole membrane. The protein resides in the cytoplasmic vesicle membrane. In terms of biological role, vacuolar zinc transporter that is probably involved in the transfer of zinc ions from the cytosol to the vacuole for intracellular storage. Plays an essential role in extracellular zinc tolerance. The protein is Vacuolar zinc transporter TgZnT of Toxoplasma gondii (strain ATCC 50853 / GT1).